We begin with the raw amino-acid sequence, 447 residues long: Na(+)-translocating NADH-quinone reductase subunit A (447 aa).

The protein belongs to the NqrA family. Composed of six subunits; NqrA, NqrB, NqrC, NqrD, NqrE and NqrF.

It catalyses the reaction a ubiquinone + n Na(+)(in) + NADH + H(+) = a ubiquinol + n Na(+)(out) + NAD(+). Its function is as follows. NQR complex catalyzes the reduction of ubiquinone-1 to ubiquinol by two successive reactions, coupled with the transport of Na(+) ions from the cytoplasm to the periplasm. NqrA to NqrE are probably involved in the second step, the conversion of ubisemiquinone to ubiquinol. In Klebsiella pneumoniae (strain 342), this protein is Na(+)-translocating NADH-quinone reductase subunit A.